The sequence spans 654 residues: tRNA 5-methylaminomethyl-2-thiouridine biosynthesis bifunctional protein MnmC (654 aa).

The segment at Met-1–Val-236 is tRNA (mnm(5)s(2)U34)-methyltransferase. The segment at Ile-262–Lys-654 is FAD-dependent cmnm(5)s(2)U34 oxidoreductase.

In the N-terminal section; belongs to the methyltransferase superfamily. tRNA (mnm(5)s(2)U34)-methyltransferase family. The protein in the C-terminal section; belongs to the DAO family. FAD is required as a cofactor.

The protein resides in the cytoplasm. The catalysed reaction is 5-aminomethyl-2-thiouridine(34) in tRNA + S-adenosyl-L-methionine = 5-methylaminomethyl-2-thiouridine(34) in tRNA + S-adenosyl-L-homocysteine + H(+). Functionally, catalyzes the last two steps in the biosynthesis of 5-methylaminomethyl-2-thiouridine (mnm(5)s(2)U) at the wobble position (U34) in tRNA. Catalyzes the FAD-dependent demodification of cmnm(5)s(2)U34 to nm(5)s(2)U34, followed by the transfer of a methyl group from S-adenosyl-L-methionine to nm(5)s(2)U34, to form mnm(5)s(2)U34. The protein is tRNA 5-methylaminomethyl-2-thiouridine biosynthesis bifunctional protein MnmC of Pseudomonas putida (strain GB-1).